The sequence spans 560 residues: Beta-glucosidase 26, peroxisomal (560 aa).

Residues glutamine 33, histidine 137, 182 to 183 (NE), tyrosine 326, glutamate 398, tryptophan 450, 457 to 458 (EW), and tyrosine 466 each bind a beta-D-glucoside. The active-site Proton donor is glutamate 183. The Nucleophile role is filled by glutamate 398.

Belongs to the glycosyl hydrolase 1 family.

It localises to the peroxisome. It carries out the reaction Hydrolysis of terminal, non-reducing beta-D-glucosyl residues with release of beta-D-glucose.. In terms of biological role, possesses beta-glucosidase activity toward 4-methyl-umbelliferyl-beta-D-glucoside in vitro. Possesses myrosinase activity toward indol-3-yl-methylglucosinolate (I3M) and 4-methoxy-indol-3-yl-methylglucosinolate (4MO-I3M) in vivo. Component of an inducible preinvasion resistance mechanism that prevents penetration of the nonhost fungal species B.graminis and E.pisi. Involved in indole glucosinolate (IGS) activation during pattern-triggered immunity (PTI). Functions as a myrosinase for the breakdown of flg22-triggered IGS. Required for both callose deposition and glucosinolate activation during pathogen-triggered resistance. During fungal attack, required for IGS activation that mediates broad-spectrum antifungal defense. In Arabidopsis thaliana (Mouse-ear cress), this protein is Beta-glucosidase 26, peroxisomal.